The chain runs to 201 residues: 3-isopropylmalate dehydratase small subunit (201 aa).

Belongs to the LeuD family. LeuD type 1 subfamily. Heterodimer of LeuC and LeuD.

It carries out the reaction (2R,3S)-3-isopropylmalate = (2S)-2-isopropylmalate. Its pathway is amino-acid biosynthesis; L-leucine biosynthesis; L-leucine from 3-methyl-2-oxobutanoate: step 2/4. Its function is as follows. Catalyzes the isomerization between 2-isopropylmalate and 3-isopropylmalate, via the formation of 2-isopropylmaleate. The sequence is that of 3-isopropylmalate dehydratase small subunit from Methylorubrum populi (strain ATCC BAA-705 / NCIMB 13946 / BJ001) (Methylobacterium populi).